The sequence spans 340 residues: UPF0324 membrane protein BC_5174 (340 aa).

10 helical membrane-spanning segments follow: residues 13-35, 40-59, 99-118, 128-150, 157-179, 189-211, 218-240, 255-277, 279-301, and 316-338; these read FGFS…LAEL, IMGQ…AAIG, VLVI…YGLT, GILT…APQV, TAVG…TLLY, YGVF…APGG, AVIV…GLWF, LPIP…GIIP, VVAG…GLGL, and FVAG…YALG.

This sequence belongs to the UPF0324 family.

It localises to the cell membrane. This chain is UPF0324 membrane protein BC_5174, found in Bacillus cereus (strain ATCC 14579 / DSM 31 / CCUG 7414 / JCM 2152 / NBRC 15305 / NCIMB 9373 / NCTC 2599 / NRRL B-3711).